Here is a 316-residue protein sequence, read N- to C-terminus: 4-hydroxy-3-methylbut-2-enyl diphosphate reductase (316 aa).

Cys12 lines the [4Fe-4S] cluster pocket. Residues His43 and His81 each coordinate (2E)-4-hydroxy-3-methylbut-2-enyl diphosphate. Dimethylallyl diphosphate is bound by residues His43 and His81. Isopentenyl diphosphate contacts are provided by His43 and His81. Cys103 serves as a coordination point for [4Fe-4S] cluster. Residue His131 coordinates (2E)-4-hydroxy-3-methylbut-2-enyl diphosphate. Residue His131 coordinates dimethylallyl diphosphate. His131 is an isopentenyl diphosphate binding site. Residue Glu133 is the Proton donor of the active site. Thr170 is a (2E)-4-hydroxy-3-methylbut-2-enyl diphosphate binding site. Residue Cys198 coordinates [4Fe-4S] cluster. Residues Ser226, Asn228, and Ser271 each coordinate (2E)-4-hydroxy-3-methylbut-2-enyl diphosphate. Residues Ser226, Asn228, and Ser271 each contribute to the dimethylallyl diphosphate site. Residues Ser226, Asn228, and Ser271 each contribute to the isopentenyl diphosphate site.

Belongs to the IspH family. [4Fe-4S] cluster serves as cofactor.

The enzyme catalyses isopentenyl diphosphate + 2 oxidized [2Fe-2S]-[ferredoxin] + H2O = (2E)-4-hydroxy-3-methylbut-2-enyl diphosphate + 2 reduced [2Fe-2S]-[ferredoxin] + 2 H(+). It carries out the reaction dimethylallyl diphosphate + 2 oxidized [2Fe-2S]-[ferredoxin] + H2O = (2E)-4-hydroxy-3-methylbut-2-enyl diphosphate + 2 reduced [2Fe-2S]-[ferredoxin] + 2 H(+). It functions in the pathway isoprenoid biosynthesis; dimethylallyl diphosphate biosynthesis; dimethylallyl diphosphate from (2E)-4-hydroxy-3-methylbutenyl diphosphate: step 1/1. Its pathway is isoprenoid biosynthesis; isopentenyl diphosphate biosynthesis via DXP pathway; isopentenyl diphosphate from 1-deoxy-D-xylulose 5-phosphate: step 6/6. Its function is as follows. Catalyzes the conversion of 1-hydroxy-2-methyl-2-(E)-butenyl 4-diphosphate (HMBPP) into a mixture of isopentenyl diphosphate (IPP) and dimethylallyl diphosphate (DMAPP). Acts in the terminal step of the DOXP/MEP pathway for isoprenoid precursor biosynthesis. The protein is 4-hydroxy-3-methylbut-2-enyl diphosphate reductase of Geobacillus kaustophilus (strain HTA426).